We begin with the raw amino-acid sequence, 221 residues long: Crossover junction endodeoxyribonuclease RuvC (221 aa).

Active-site residues include Asp-12, Glu-73, and Asp-146. The Mg(2+) site is built by Asp-12, Glu-73, and Asp-146. The tract at residues 169 to 221 (SQYSEQELEKRRRVQQGKLGKAKSTYNAEQAQSHASDPAKAAHPSQFQRTDTN) is disordered. Polar residues predominate over residues 192–203 (STYNAEQAQSHA).

This sequence belongs to the RuvC family. Homodimer which binds Holliday junction (HJ) DNA. The HJ becomes 2-fold symmetrical on binding to RuvC with unstacked arms; it has a different conformation from HJ DNA in complex with RuvA. In the full resolvosome a probable DNA-RuvA(4)-RuvB(12)-RuvC(2) complex forms which resolves the HJ. Requires Mg(2+) as cofactor.

It is found in the cytoplasm. The catalysed reaction is Endonucleolytic cleavage at a junction such as a reciprocal single-stranded crossover between two homologous DNA duplexes (Holliday junction).. Its function is as follows. The RuvA-RuvB-RuvC complex processes Holliday junction (HJ) DNA during genetic recombination and DNA repair. Endonuclease that resolves HJ intermediates. Cleaves cruciform DNA by making single-stranded nicks across the HJ at symmetrical positions within the homologous arms, yielding a 5'-phosphate and a 3'-hydroxyl group; requires a central core of homology in the junction. The consensus cleavage sequence is 5'-(A/T)TT(C/G)-3'. Cleavage occurs on the 3'-side of the TT dinucleotide at the point of strand exchange. HJ branch migration catalyzed by RuvA-RuvB allows RuvC to scan DNA until it finds its consensus sequence, where it cleaves and resolves the cruciform DNA. The polypeptide is Crossover junction endodeoxyribonuclease RuvC (Corynebacterium glutamicum (strain ATCC 13032 / DSM 20300 / JCM 1318 / BCRC 11384 / CCUG 27702 / LMG 3730 / NBRC 12168 / NCIMB 10025 / NRRL B-2784 / 534)).